A 417-amino-acid polypeptide reads, in one-letter code: MFGRAPKKSDSTRYYEILGVPKDASPEDLKKAYKKAAIKNHPDKGGDPEKFKELAHAYEVLSDPEKREIYDQYGEDALKEGMGGGGGMHDPFDIFQSFFGGSPFGGVGSSRGRRQRRGEDVVHPLKVSLEDLFTGTTKKLSLSRNVICSKCTGKGSKSGASMKCSGCQGTGMKVSIRHLGPSMIQQMQHPCNECKGTGETINDKDRCPQCKGEKVVQEKKVLEVVVEKGMQHGQKITFPGEADEAPDTVTGDIVFVLQQKEHPKFKRKGEDLFYEHTLSLTEALCGFRFVLTHLDGRQLLIKSNLGEVVKPDQFKAIEDEGMPIYQRPFMKGKMYIHFTVEFPDSLNPDQVKSLEAILPPKPSMSLTYMELDECEETTLHNVNIEEEMKRKQTQAQQEAYDEDDEPAGGQRVQCAQQ.

The J domain maps to 11-76; it reads STRYYEILGV…REIYDQYGED (66 aa). The CR-type zinc-finger motif lies at 135–219; the sequence is GTTKKLSLSR…CKGEKVVQEK (85 aa). CXXCXGXG motif repeat units follow at residues 148–155, 164–171, and 191–198; these read CSKCTGKG, CSGCQGTG, and CNECKGTG. The CXXCXGXG motif; approximate repeat unit spans residues 207–214; the sequence is CPQCKGEK. Positions 384–417 are disordered; that stretch reads IEEEMKRKQTQAQQEAYDEDDEPAGGQRVQCAQQ. Residue cysteine 414 is modified to Cysteine methyl ester. Cysteine 414 is lipidated: S-farnesyl cysteine. The propeptide at 415-417 is removed in mature form; the sequence is AQQ.

It localises to the membrane. Plays a continuous role in plant development probably in the structural organization of compartments. This Atriplex nummularia (Old man saltbush) protein is DnaJ protein homolog ANJ1.